The chain runs to 253 residues: Pre-mRNA-splicing factor SPF27 homolog (253 aa).

A coiled-coil region spans residues 124 to 235 (KQYLQKNQRS…IDSFKKEAAE (112 aa)).

Belongs to the SPF27 family. In terms of assembly, component of the multiprotein assembly MOS4-associated complex (MAC) at least composed of MOS4, CDC5 and PRL1. Interacts with CYCL1-1 and CDC5. Associated with the spliceosome. Interacts with ENY2.

The protein localises to the nucleus. In terms of biological role, component of the MAC complex that probably regulates defense responses through transcriptional control and thereby is essential for plant innate immunity. Involved in mRNA splicing. This chain is Pre-mRNA-splicing factor SPF27 homolog (MOS4), found in Arabidopsis thaliana (Mouse-ear cress).